Reading from the N-terminus, the 545-residue chain is Tripartite motif-containing protein 55 (545 aa).

The segment at 26-82 adopts an RING-type zinc-finger fold; that stretch reads CPICLEMFTKPVVILPCQHNLCRKCASDIFQASNPYLPTRGGTTVASGGRFRCPSCR. Residues 119–161 form a B box-type zinc finger; the sequence is LDQPMCEEHEEERINIYCLNCEVPTCSLCKVFGAHKDCQVAPL. Zn(2+) is bound by residues C124, H127, C147, and H153. Residues 219 to 258 are a coiled coil; sequence YSILEERKTEMTQAITRTQEEKLEHVRTLIRKYSDHLENV. A COS domain is found at 269-327; sequence MDEPEMAVFLQNAKTLLQKITEASKAFQMEKIEQGYEIMNNFTVNLNREEKIIREIDFS. Disordered regions lie at residues 324–378 and 406–528; these read IDFS…SELA and LVTQ…GADS. The span at 328 to 355 shows a compositional bias: acidic residues; sequence REEEDEDDEGEVDEEGEGEDAVEVEEAE. 2 stretches are compositionally biased toward low complexity: residues 417–426 and 469–493; these read SQQTTQSETS and SAAEDSSVQSAEVAEAAANEQAAVS. The span at 495–506 shows a compositional bias: polar residues; sequence KESSSTAATSQI. Over residues 510 to 520 the composition is skewed to low complexity; sequence ASSPQGQAAAL.

In terms of assembly, homooligomer and heterooligomer. Interacts with titin/TTN. Interacts with myosins. Interacts with SQSTM1 and NBR1. Probably interacts with TRIM63 and TRIM54. Post-translationally, targeted for degradation through the proteasomal and lysosomal pathways in the presence of SUMO3.

The protein localises to the nucleus. It is found in the cytoplasm. The catalysed reaction is S-ubiquitinyl-[E2 ubiquitin-conjugating enzyme]-L-cysteine + [acceptor protein]-L-lysine = [E2 ubiquitin-conjugating enzyme]-L-cysteine + N(6)-ubiquitinyl-[acceptor protein]-L-lysine.. E3 ubiquitin ligase that plays an important role in regulating cardiac development and contractility, muscle growth, metabolism, and fiber-type differentiation. Acts as a critical factor that regulates cardiomyocyte size during development in concert with TRIM63 by regulating E2F1-mediated gene expression. Plays a role in apoptosis induction in cardiomyocytes by promoting ubiquitination of the DUSP1 phosphatase. Promotes non-canonical NF-kappa-B signaling and B-cell-mediated immune responses by mediating NFKB2 'Lys-48'-linked ubiquitination and processing. In turn, NFKB2 is further processed by valosin-containing protein/VCP, an ATPase that mediates ubiquitin-dependent protein degradation by the proteasome. May play a role in preventing macrophages from producing inflammatory factors and migrating by downregulating the level of nuclear NF-kappa-B subunit RELA. Also modifies PPARG via polyubiquitination and accelerates PPARG proteasomal degradation to inhibit its activity. This Rattus norvegicus (Rat) protein is Tripartite motif-containing protein 55 (Trim55).